The following is a 338-amino-acid chain: MSGMRTLGEFIVEKQADFPHASGDLSSLLASIRLAAKIVNREINAAGLGDITGAVGTENVQGEAQQKLDVYANDKFKAALEARDQVCGVASEEEDEAVAFNKELNQNAKYVVLMDPLDGSSNIDVNVSVGTIFSIYRRVSPIGTPATEEDFLQPGHKQVAAGYVIYGSSTMLVYTTGNGVNGFTYDPSIGSFCLSHENMMIPEDGKIYSINEGNYIRFPQGVKKYIKYCQENVPEDGRPYTSRYIGSLVADFHRNLLKGGIYLYPSTQSHPQGKLRLLYECNPMAFLIEQAGGIASDGVNRIMDIKPTELHQRVPFFVGSKNMVRKVEEFLELHRDEE.

4 residues coordinate Mg(2+): E92, D115, L117, and D118. Residues 118 to 121 (DGSS), N211, Y244, 262 to 264 (YLY), and K274 contribute to the substrate site. Residue E280 coordinates Mg(2+).

Belongs to the FBPase class 1 family. As to quaternary structure, homotetramer. The cofactor is Mg(2+).

The protein resides in the cytoplasm. It catalyses the reaction beta-D-fructose 1,6-bisphosphate + H2O = beta-D-fructose 6-phosphate + phosphate. It functions in the pathway carbohydrate biosynthesis; gluconeogenesis. In Vibrio parahaemolyticus serotype O3:K6 (strain RIMD 2210633), this protein is Fructose-1,6-bisphosphatase class 1.